The chain runs to 242 residues: Peroxisomal membrane protein 11-3 (242 aa).

Residues 1-22 (MAAAAAAAGSSDSRKPAAHPPP) form a disordered region. The Cytoplasmic segment spans residues 1 to 102 (MAAAAAAAGS…LRAHPHPPPA (102 aa)). Residues 103–123 (VALLAYGGEGVYYFLEQFVWL) traverse the membrane as a helical segment. The Lumenal segment spans residues 124-214 (AKAGLLPAHL…MALGDVTDGK (91 aa)). The chain crosses the membrane as a helical span at residues 215–235 (GLLGSSTLMASAGLLSALISA). Over 236–242 (HKNWNSC) the chain is Cytoplasmic.

This sequence belongs to the peroxin-11 family. In terms of tissue distribution, expressed in seedlings, roots, leaf sheaths, spikelets and endosperm.

The protein resides in the peroxisome membrane. Its function is as follows. Involved in peroxisomal proliferation. This is Peroxisomal membrane protein 11-3 (PEX11-3) from Oryza sativa subsp. japonica (Rice).